The sequence spans 320 residues: o-succinylbenzoate synthase (320 aa).

Residue Lys133 is the Proton donor of the active site. Mg(2+) contacts are provided by Asp161, Glu190, and Asp213. The Proton acceptor role is filled by Lys235.

Belongs to the mandelate racemase/muconate lactonizing enzyme family. MenC type 1 subfamily. The cofactor is a divalent metal cation.

It carries out the reaction (1R,6R)-6-hydroxy-2-succinyl-cyclohexa-2,4-diene-1-carboxylate = 2-succinylbenzoate + H2O. The protein operates within quinol/quinone metabolism; 1,4-dihydroxy-2-naphthoate biosynthesis; 1,4-dihydroxy-2-naphthoate from chorismate: step 4/7. Its pathway is quinol/quinone metabolism; menaquinone biosynthesis. Its function is as follows. Converts 2-succinyl-6-hydroxy-2,4-cyclohexadiene-1-carboxylate (SHCHC) to 2-succinylbenzoate (OSB). The sequence is that of o-succinylbenzoate synthase from Salmonella dublin (strain CT_02021853).